Here is a 115-residue protein sequence, read N- to C-terminus: U3-lycotoxin-Ls1a (115 aa).

The signal sequence occupies residues 1 to 20 (MKFVLLFGVLLLTLFSYSSA). The propeptide occupies 21-44 (EMLDDFDQADEDELLSLIEKEEAR). 4 disulfide bridges follow: C48-C63, C55-C72, C62-C87, and C74-C85.

Belongs to the neurotoxin 19 (CSTX) family. 01 subfamily. Expressed by the venom gland.

Its subcellular location is the secreted. This is U3-lycotoxin-Ls1a from Lycosa singoriensis (Wolf spider).